The sequence spans 954 residues: Glycine dehydrogenase (decarboxylating) (954 aa).

Lys-704 carries the N6-(pyridoxal phosphate)lysine modification.

It belongs to the GcvP family. The glycine cleavage system is composed of four proteins: P, T, L and H. Requires pyridoxal 5'-phosphate as cofactor.

The catalysed reaction is N(6)-[(R)-lipoyl]-L-lysyl-[glycine-cleavage complex H protein] + glycine + H(+) = N(6)-[(R)-S(8)-aminomethyldihydrolipoyl]-L-lysyl-[glycine-cleavage complex H protein] + CO2. Its function is as follows. The glycine cleavage system catalyzes the degradation of glycine. The P protein binds the alpha-amino group of glycine through its pyridoxal phosphate cofactor; CO(2) is released and the remaining methylamine moiety is then transferred to the lipoamide cofactor of the H protein. This is Glycine dehydrogenase (decarboxylating) from Vibrio cholerae serotype O1 (strain ATCC 39541 / Classical Ogawa 395 / O395).